Here is a 230-residue protein sequence, read N- to C-terminus: Ribosomal RNA small subunit methyltransferase G (230 aa).

S-adenosyl-L-methionine is bound by residues glycine 80, phenylalanine 85, 131–132, and arginine 145; that span reads VE.

It belongs to the methyltransferase superfamily. RNA methyltransferase RsmG family.

The protein resides in the cytoplasm. The enzyme catalyses guanosine(527) in 16S rRNA + S-adenosyl-L-methionine = N(7)-methylguanosine(527) in 16S rRNA + S-adenosyl-L-homocysteine. Its function is as follows. Specifically methylates the N7 position of guanine in position 527 of 16S rRNA. The chain is Ribosomal RNA small subunit methyltransferase G from Novosphingobium aromaticivorans (strain ATCC 700278 / DSM 12444 / CCUG 56034 / CIP 105152 / NBRC 16084 / F199).